Consider the following 192-residue polypeptide: Elongation factor P (192 aa).

The protein belongs to the elongation factor P family.

It localises to the cytoplasm. The protein operates within protein biosynthesis; polypeptide chain elongation. Functionally, involved in peptide bond synthesis. Stimulates efficient translation and peptide-bond synthesis on native or reconstituted 70S ribosomes in vitro. Probably functions indirectly by altering the affinity of the ribosome for aminoacyl-tRNA, thus increasing their reactivity as acceptors for peptidyl transferase. The polypeptide is Elongation factor P (Borrelia duttonii (strain Ly)).